We begin with the raw amino-acid sequence, 469 residues long: Collagenase 3 (469 aa).

A signal peptide spans 1 to 17 (SSLSVLVLSLSFAYCLS). A propeptide spans 18 to 100 (APVPQDEDSE…QPRCGVPDVG (83 aa)) (activation peptide). The Cysteine switch signature appears at 92–99 (PRCGVPDV). Residue Cys-94 coordinates Zn(2+). Asn-115 carries N-linked (GlcNAc...) asparagine glycosylation. Asp-126 contacts Ca(2+). N-linked (GlcNAc...) asparagine glycosylation is present at Asn-150. Position 160 (Asp-160) interacts with Ca(2+). Residues His-170 and Asp-172 each contribute to the Zn(2+) site. Residues Asp-177, Gly-178, and Leu-182 each coordinate Ca(2+). A Zn(2+)-binding site is contributed by His-185. Ca(2+) is bound by residues Gly-194 and Asp-196. His-198 provides a ligand contact to Zn(2+). Ca(2+) is bound by residues Asp-200, Asp-201, and Glu-203. His-220 serves as a coordination point for Zn(2+). Glu-221 is a catalytic residue. Zn(2+)-binding residues include His-224, His-230, and Met-238. The tract at residues 266–469 (PGNRDPHPKH…ILKTNFVLMC (204 aa)) is interaction with collagen. 4 Hemopexin repeats span residues 279 to 328 (PEKC…WPEL), 329 to 375 (PNKL…GFPK), 377 to 425 (LKAI…FPGI), and 426 to 469 (GEKV…VLMC). Residues Cys-282 and Cys-469 are joined by a disulfide bond. Asp-289, Ile-291, Asp-333, Ala-335, Ala-383, and Asp-430 together coordinate Ca(2+).

This sequence belongs to the peptidase M10A family. Ca(2+) serves as cofactor. Zn(2+) is required as a cofactor. In terms of processing, the proenzyme is activated by removal of the propeptide; this cleavage can be effected by other matrix metalloproteinases and may involve several cleavage steps. Cleavage can also be autocatalytic, after partial maturation by another protease or after treatment with 4-aminophenylmercuric acetate (APMA) (in vitro).

Its subcellular location is the secreted. It is found in the extracellular space. It localises to the extracellular matrix. In terms of biological role, plays a role in the degradation of extracellular matrix proteins including fibrillar collagen, fibronectin, TNC and ACAN. Cleaves several types of triple helical collagen. May also function by activating or degrading key regulatory proteins. Plays a role in wound healing, tissue remodeling, cartilage degradation, bone development, bone mineralization and ossification. The sequence is that of Collagenase 3 (mmp13) from Xenopus laevis (African clawed frog).